The primary structure comprises 518 residues: Serine hydroxymethyltransferase, mitochondrial (518 aa).

Residues 1–31 (MAMAMALRKLSSSVNKSSRPLFSASSLYYKS) constitute a mitochondrion transit peptide. K287 is subject to N6-(pyridoxal phosphate)lysine.

The protein belongs to the SHMT family. As to quaternary structure, homotetramer. It depends on pyridoxal 5'-phosphate as a cofactor.

The protein resides in the mitochondrion. The enzyme catalyses (6R)-5,10-methylene-5,6,7,8-tetrahydrofolate + glycine + H2O = (6S)-5,6,7,8-tetrahydrofolate + L-serine. Its pathway is one-carbon metabolism; tetrahydrofolate interconversion. Catalyzes the interconversion of serine and glycine. The chain is Serine hydroxymethyltransferase, mitochondrial from Pisum sativum (Garden pea).